We begin with the raw amino-acid sequence, 259 residues long: Isoepoxydon dehydrogenase patN (259 aa).

NADP(+)-binding residues include D69, N96, and K125. Active-site proton donor residues include S143 and S144. Y158, K162, and V191 together coordinate NADP(+). The Proton acceptor role is filled by Y158. K162 functions as the Lowers pKa of active site Tyr in the catalytic mechanism.

Belongs to the short-chain dehydrogenases/reductases (SDR) family.

It localises to the cytoplasm. Its subcellular location is the cytosol. It carries out the reaction isoepoxydon + NADP(+) = phyllostine + NADPH + H(+). Its pathway is mycotoxin biosynthesis; patulin biosynthesis. Its function is as follows. Isoepoxydon dehydrogenase; part of the gene cluster that mediates the biosynthesis of patulin, an acetate-derived tetraketide mycotoxin produced by several fungal species that shows antimicrobial properties against several bacteria. PatN catalyzes the conversion of isoepoxydon into phyllostine. The pathway begins with the synthesis of 6-methylsalicylic acid by the polyketide synthase (PKS) patK via condensation of acetate and malonate units. The 6-methylsalicylic acid decarboxylase patG then catalyzes the decarboxylation of 6-methylsalicylic acid to yield m-cresol (also known as 3-methylphenol). These first reactions occur in the cytosol. The intermediate m-cresol is then transported into the endoplasmic reticulum where the cytochrome P450 monooxygenase patH converts it to m-hydroxybenzyl alcohol, which is further converted to gentisyl alcohol by the cytochrome P450 monooxygenase patI. The oxidoreductases patJ and patO further convert gentisyl alcohol to isoepoxydon in the vacuole. PatN catalyzes then the transformation of isoepoxydon into phyllostine. The cluster protein patF is responsible for the conversion from phyllostine to neopatulin whereas the alcohol dehydrogenase patD converts neopatulin to E-ascladiol. The steps between isoepoxydon and E-ascladiol occur in the cytosol, and E-ascladiol is probably secreted to the extracellular space by one of the cluster-specific transporters patC or patM. Finally, the secreted patulin synthase patE catalyzes the conversion of E-ascladiol to patulin. In Penicillium expansum (Blue mold rot fungus), this protein is Isoepoxydon dehydrogenase patN.